The sequence spans 363 residues: S-adenosylmethionine:tRNA ribosyltransferase-isomerase (363 aa).

The protein belongs to the QueA family. As to quaternary structure, monomer.

Its subcellular location is the cytoplasm. The catalysed reaction is 7-aminomethyl-7-carbaguanosine(34) in tRNA + S-adenosyl-L-methionine = epoxyqueuosine(34) in tRNA + adenine + L-methionine + 2 H(+). The protein operates within tRNA modification; tRNA-queuosine biosynthesis. Transfers and isomerizes the ribose moiety from AdoMet to the 7-aminomethyl group of 7-deazaguanine (preQ1-tRNA) to give epoxyqueuosine (oQ-tRNA). This chain is S-adenosylmethionine:tRNA ribosyltransferase-isomerase, found in Magnetococcus marinus (strain ATCC BAA-1437 / JCM 17883 / MC-1).